Here is a 369-residue protein sequence, read N- to C-terminus: 4beta-methylsterol monooxygenase (369 aa).

Residues 29–135 form the Rieske domain; sequence WYVVEIDGRL…VKAQWGLIWL (107 aa). [2Fe-2S] cluster is bound by residues cysteine 70, histidine 72, cysteine 89, and histidine 92.

Requires [2Fe-2S] cluster as cofactor.

The enzyme catalyses a 3beta-hydroxy-4,4-dimethylsteroid + 3 NADH + 3 O2 + 2 H(+) = a 3beta-hydroxy-4alpha-methylsteroid-4beta-carboxylate + 3 NAD(+) + 4 H2O. The catalysed reaction is 4,4-dimethyl-5alpha-cholesta-8,24-dien-3beta-ol + 3 NADH + 3 O2 + 2 H(+) = 4beta-carboxy-4alpha-methyl-5alpha-cholesta-8,24-dien-3beta-ol + 3 NAD(+) + 4 H2O. It catalyses the reaction a 3beta-hydroxy-4,4-dimethylsteroid + NADH + O2 + H(+) = a 3beta-hydroxy-4beta-hydroxymethyl-4alpha-methylsteroid + NAD(+) + H2O. It carries out the reaction a 3beta-hydroxy-4beta-hydroxymethyl-4alpha-methylsteroid + NADH + O2 + H(+) = a 3beta-hydroxy-4beta-formyl-4alpha-methylsteroid + NAD(+) + 2 H2O. The enzyme catalyses a 3beta-hydroxy-4beta-formyl-4alpha-methylsteroid + NADH + O2 = a 3beta-hydroxy-4alpha-methylsteroid-4beta-carboxylate + NAD(+) + H2O. The catalysed reaction is 4,4-dimethyl-5alpha-cholesta-8,24-dien-3beta-ol + NADH + O2 + H(+) = 4beta-hydroxymethyl-4alpha-methylzymosterol + NAD(+) + H2O. It catalyses the reaction 4beta-hydroxymethyl-4alpha-methylzymosterol + NADH + O2 + H(+) = 4beta-formylmethyl-4alpha-methyl-5alpha-cholesta-8,24-dien-3beta-ol + NAD(+) + 2 H2O. It carries out the reaction 4beta-formylmethyl-4alpha-methyl-5alpha-cholesta-8,24-dien-3beta-ol + NADH + O2 = 4beta-carboxy-4alpha-methyl-5alpha-cholesta-8,24-dien-3beta-ol + NAD(+) + H2O. It functions in the pathway steroid biosynthesis; sterol biosynthesis. Participates in the biosynthesis of bacterial sterols. Together with SdmB, removes one methyl group from the C-4 position of 4,4-dimethylated steroid molecules. SdmA oxidizes the sterol 4beta-methyl group into first a hydroxyl, then an aldehyde and finally a carboxylic acid group. This is 4beta-methylsterol monooxygenase from Methylococcus capsulatus (strain ATCC 33009 / NCIMB 11132 / Bath).